A 261-amino-acid chain; its full sequence is Sepiapterin reductase (261 aa).

Met1 is modified (N-acetylmethionine). 14–20 (GASRGFG) contacts NADP(+). At Ser32 the chain carries Phosphoserine. Residues 42-43 (RN) and 69-70 (DL) contribute to the NADP(+) site. A Phosphoserine modification is found at Ser103. Substrate-binding positions include 157-158 (SL) and Tyr170. Lys174 lines the NADP(+) pocket. Gly199 lines the substrate pocket. 201–206 (LDTDMQ) provides a ligand contact to NADP(+). Ser213 carries the phosphoserine; by CaMK2; in vitro modification. Asp257 contributes to the substrate binding site.

Belongs to the sepiapterin reductase family. Homodimer. Post-translationally, in vitro phosphorylation of Ser-213 by CaMK2 does not change kinetic parameters.

It is found in the cytoplasm. The catalysed reaction is L-erythro-7,8-dihydrobiopterin + NADP(+) = L-sepiapterin + NADPH + H(+). It catalyses the reaction (6R)-L-erythro-5,6,7,8-tetrahydrobiopterin + 2 NADP(+) = 6-pyruvoyl-5,6,7,8-tetrahydropterin + 2 NADPH + 2 H(+). Catalyzes the final one or two reductions in tetra-hydrobiopterin biosynthesis to form 5,6,7,8-tetrahydrobiopterin. In Homo sapiens (Human), this protein is Sepiapterin reductase (SPR).